The primary structure comprises 144 residues: Putative pre-16S rRNA nuclease (144 aa).

The protein belongs to the YqgF nuclease family.

The protein resides in the cytoplasm. Could be a nuclease involved in processing of the 5'-end of pre-16S rRNA. This Wigglesworthia glossinidia brevipalpis protein is Putative pre-16S rRNA nuclease.